The primary structure comprises 347 residues: Holliday junction branch migration complex subunit RuvB (347 aa).

A large ATPase domain (RuvB-L) region spans residues 4–185 (TDRLITPAPL…FGIISRLEFY (182 aa)). Residues Leu-24, Arg-25, Gly-66, Lys-69, Thr-70, Thr-71, 132 to 134 (EDY), Arg-175, Tyr-185, and Arg-222 contribute to the ATP site. Residue Thr-70 coordinates Mg(2+). The tract at residues 186–256 (SVEELTQIVM…VADAALLMLD (71 aa)) is small ATPAse domain (RuvB-S). Positions 259 to 347 (AIGLDVMDRK…LSADLWDEKQ (89 aa)) are head domain (RuvB-H). 3 residues coordinate DNA: Arg-295, Arg-314, and Arg-319.

Belongs to the RuvB family. In terms of assembly, homohexamer. Forms an RuvA(8)-RuvB(12)-Holliday junction (HJ) complex. HJ DNA is sandwiched between 2 RuvA tetramers; dsDNA enters through RuvA and exits via RuvB. An RuvB hexamer assembles on each DNA strand where it exits the tetramer. Each RuvB hexamer is contacted by two RuvA subunits (via domain III) on 2 adjacent RuvB subunits; this complex drives branch migration. In the full resolvosome a probable DNA-RuvA(4)-RuvB(12)-RuvC(2) complex forms which resolves the HJ.

It is found in the cytoplasm. It catalyses the reaction ATP + H2O = ADP + phosphate + H(+). Functionally, the RuvA-RuvB-RuvC complex processes Holliday junction (HJ) DNA during genetic recombination and DNA repair, while the RuvA-RuvB complex plays an important role in the rescue of blocked DNA replication forks via replication fork reversal (RFR). RuvA specifically binds to HJ cruciform DNA, conferring on it an open structure. The RuvB hexamer acts as an ATP-dependent pump, pulling dsDNA into and through the RuvAB complex. RuvB forms 2 homohexamers on either side of HJ DNA bound by 1 or 2 RuvA tetramers; 4 subunits per hexamer contact DNA at a time. Coordinated motions by a converter formed by DNA-disengaged RuvB subunits stimulates ATP hydrolysis and nucleotide exchange. Immobilization of the converter enables RuvB to convert the ATP-contained energy into a lever motion, pulling 2 nucleotides of DNA out of the RuvA tetramer per ATP hydrolyzed, thus driving DNA branch migration. The RuvB motors rotate together with the DNA substrate, which together with the progressing nucleotide cycle form the mechanistic basis for DNA recombination by continuous HJ branch migration. Branch migration allows RuvC to scan DNA until it finds its consensus sequence, where it cleaves and resolves cruciform DNA. This chain is Holliday junction branch migration complex subunit RuvB, found in Nitrosospira multiformis (strain ATCC 25196 / NCIMB 11849 / C 71).